The sequence spans 129 residues: Glycine cleavage system H protein (129 aa).

The 83-residue stretch at 24–106 (TYTVGITEHA…YTGGWIFKIK (83 aa)) folds into the Lipoyl-binding domain. N6-lipoyllysine is present on lysine 65.

This sequence belongs to the GcvH family. The glycine cleavage system is composed of four proteins: P, T, L and H. (R)-lipoate serves as cofactor.

Its function is as follows. The glycine cleavage system catalyzes the degradation of glycine. The H protein shuttles the methylamine group of glycine from the P protein to the T protein. The polypeptide is Glycine cleavage system H protein (Salmonella choleraesuis (strain SC-B67)).